The following is a 149-amino-acid chain: MQEHAKILLLPHGKDLEIPRYASKGSSGLDLRAAIEGSMTLKPGMFELVPTGICIELPEGLEAQIRPRSGLAAKFGITVLNSPGTVDQDYRGEIKVCLVNLSKNEFTINRGDRIAQMVIAKVEQILLVEAEEIGETERASGSFGSTGTE.

Substrate contacts are provided by residues 68 to 70 (RSG), asparagine 81, 85 to 87 (TVD), and lysine 95.

This sequence belongs to the dUTPase family. It depends on Mg(2+) as a cofactor.

It catalyses the reaction dUTP + H2O = dUMP + diphosphate + H(+). The protein operates within pyrimidine metabolism; dUMP biosynthesis; dUMP from dCTP (dUTP route): step 2/2. This enzyme is involved in nucleotide metabolism: it produces dUMP, the immediate precursor of thymidine nucleotides and it decreases the intracellular concentration of dUTP so that uracil cannot be incorporated into DNA. The protein is Deoxyuridine 5'-triphosphate nucleotidohydrolase of Neorickettsia sennetsu (strain ATCC VR-367 / Miyayama) (Ehrlichia sennetsu).